A 119-amino-acid polypeptide reads, in one-letter code: Large ribosomal subunit protein bL20c (119 aa).

Belongs to the bacterial ribosomal protein bL20 family.

The protein localises to the plastid. The protein resides in the chloroplast. Its function is as follows. Binds directly to 23S ribosomal RNA and is necessary for the in vitro assembly process of the 50S ribosomal subunit. It is not involved in the protein synthesizing functions of that subunit. The protein is Large ribosomal subunit protein bL20c of Amborella trichopoda.